A 344-amino-acid chain; its full sequence is Ribosomal RNA large subunit methyltransferase Cfr (344 aa).

The active-site Proton acceptor is the glutamate 88. The region spanning lysine 95–arginine 324 is the Radical SAM core domain. Cysteine 102 and cysteine 335 are oxidised to a cystine. 3 residues coordinate [4Fe-4S] cluster: cysteine 109, cysteine 113, and cysteine 116. S-adenosyl-L-methionine contacts are provided by residues glycine 155–glutamate 156, serine 186, serine 209–histidine 211, and asparagine 290. Cysteine 335 acts as the S-methylcysteine intermediate in catalysis.

The protein belongs to the radical SAM superfamily. RlmN family. Cfr subfamily. Requires [4Fe-4S] cluster as cofactor.

It is found in the cytoplasm. The enzyme catalyses adenosine(2503) in 23S rRNA + 2 reduced [2Fe-2S]-[ferredoxin] + 2 S-adenosyl-L-methionine = 8-methyladenosine(2503) in 23S rRNA + 5'-deoxyadenosine + L-methionine + 2 oxidized [2Fe-2S]-[ferredoxin] + S-adenosyl-L-homocysteine. Its function is as follows. Specifically methylates position 8 of adenine 2503 in 23S rRNA. Confers resistance to some classes of antibiotics. The protein is Ribosomal RNA large subunit methyltransferase Cfr of Lachnoclostridium phytofermentans (strain ATCC 700394 / DSM 18823 / ISDg) (Clostridium phytofermentans).